Here is a 149-residue protein sequence, read N- to C-terminus: Transcription antitermination protein NusB (149 aa).

The protein belongs to the NusB family.

In terms of biological role, involved in transcription antitermination. Required for transcription of ribosomal RNA (rRNA) genes. Binds specifically to the boxA antiterminator sequence of the ribosomal RNA (rrn) operons. The polypeptide is Transcription antitermination protein NusB (Chromobacterium violaceum (strain ATCC 12472 / DSM 30191 / JCM 1249 / CCUG 213 / NBRC 12614 / NCIMB 9131 / NCTC 9757 / MK)).